A 337-amino-acid polypeptide reads, in one-letter code: Anthranilate phosphoribosyltransferase (337 aa).

5-phospho-alpha-D-ribose 1-diphosphate contacts are provided by residues glycine 80, 83–84 (GD), threonine 88, 90–93 (NIST), 108–116 (KHGNRAVSS), and serine 120. Residue glycine 80 coordinates anthranilate. Serine 92 serves as a coordination point for Mg(2+). Asparagine 111 contributes to the anthranilate binding site. Position 166 (arginine 166) interacts with anthranilate. Residues aspartate 224 and glutamate 225 each coordinate Mg(2+).

The protein belongs to the anthranilate phosphoribosyltransferase family. As to quaternary structure, homodimer. The cofactor is Mg(2+).

The enzyme catalyses N-(5-phospho-beta-D-ribosyl)anthranilate + diphosphate = 5-phospho-alpha-D-ribose 1-diphosphate + anthranilate. It participates in amino-acid biosynthesis; L-tryptophan biosynthesis; L-tryptophan from chorismate: step 2/5. Catalyzes the transfer of the phosphoribosyl group of 5-phosphorylribose-1-pyrophosphate (PRPP) to anthranilate to yield N-(5'-phosphoribosyl)-anthranilate (PRA). This chain is Anthranilate phosphoribosyltransferase, found in Anaeromyxobacter dehalogenans (strain 2CP-1 / ATCC BAA-258).